The sequence spans 565 residues: Periplasmic trehalase (565 aa).

Residues 1–30 (MKSPAPSRPQKMALIPACIFLYFAALSVQA) form the signal peptide. Residues R152, 159 to 160 (WD), N196, 205 to 207 (RSQ), 277 to 279 (RPE), and G310 contribute to the substrate site. Active-site proton donor/acceptor residues include D312 and E496. Position 511 (E511) interacts with substrate. Positions 540 to 565 (DNVPATHPTVKSATTQPSTKEAQPTP) are disordered. The span at 548-565 (TVKSATTQPSTKEAQPTP) shows a compositional bias: polar residues.

It belongs to the glycosyl hydrolase 37 family. Monomer.

The protein localises to the periplasm. The catalysed reaction is alpha,alpha-trehalose + H2O = alpha-D-glucose + beta-D-glucose. Its function is as follows. Provides the cells with the ability to utilize trehalose at high osmolarity by splitting it into glucose molecules that can subsequently be taken up by the phosphotransferase-mediated uptake system. This chain is Periplasmic trehalase, found in Shigella flexneri serotype 5b (strain 8401).